The sequence spans 235 residues: MLNITPIPALSDNYIWAIQKDNDVIIVDPSDAVPVLAFIAKNQLNLTAILLTHNHHDHTDGMPELLSRYPQLSVYGPQEVAQFANRIVQPEDHLTLFDYDVRVIESAGHTAQHVSYLFGNEYLFCGDVLFSGGCGRVFTGNYQAQFDALQRFKALPEFVEIFPAHEYTLSNLKFAEAVLAPSCALFEIQERAEILRSRNQPTLPTTLERELQINPFLQAVDLDQFIALRHQKDNF.

Residues His53, His55, Asp57, His58, His109, Asp127, and His165 each coordinate Zn(2+).

The protein belongs to the metallo-beta-lactamase superfamily. Glyoxalase II family. Monomer. Requires Zn(2+) as cofactor.

It catalyses the reaction an S-(2-hydroxyacyl)glutathione + H2O = a 2-hydroxy carboxylate + glutathione + H(+). It participates in secondary metabolite metabolism; methylglyoxal degradation; (R)-lactate from methylglyoxal: step 2/2. Its function is as follows. Thiolesterase that catalyzes the hydrolysis of S-D-lactoyl-glutathione to form glutathione and D-lactic acid. This Actinobacillus pleuropneumoniae serotype 7 (strain AP76) protein is Hydroxyacylglutathione hydrolase.